Reading from the N-terminus, the 254-residue chain is Decaprenylphosphoryl-2-keto-beta-D-erythro-pentose reductase (254 aa).

An NAD(+)-binding site is contributed by Asp-67. The Proton acceptor role is filled by Tyr-160. Lys-164 lines the NAD(+) pocket.

The protein belongs to the short-chain dehydrogenases/reductases (SDR) family. In terms of assembly, interacts with DprE1 to form an epimerase complex.

The protein localises to the periplasm. It catalyses the reaction trans,octa-cis-decaprenylphospho-beta-D-arabinofuranose + NAD(+) = trans,octa-cis-decaprenylphospho-beta-D-erythro-pentofuranosid-2-ulose + NADH + H(+). It functions in the pathway cell wall biogenesis; cell wall polysaccharide biosynthesis. In terms of biological role, component of the DprE1-DprE2 complex that catalyzes the 2-step epimerization of decaprenyl-phospho-ribose (DPR) to decaprenyl-phospho-arabinose (DPA), a key precursor that serves as the arabinose donor required for the synthesis of cell-wall arabinans. DprE1 catalyzes the first step of epimerization, namely FAD-dependent oxidation of the C2' hydroxyl of DPR to yield the keto intermediate decaprenyl-phospho-2'-keto-D-arabinose (DPX). The intermediate DPX is then transferred to DprE2 subunit of the epimerase complex, most probably through a 'substrate channel' at the interface of DprE1-DprE2 complex. DprE2 then catalyzes the second step of epimerization, the NAD(+)-dependent reduction of DPX that leads to the formation of DPA. This chain is Decaprenylphosphoryl-2-keto-beta-D-erythro-pentose reductase, found in Mycolicibacterium smegmatis (strain ATCC 700084 / mc(2)155) (Mycobacterium smegmatis).